The primary structure comprises 546 residues: RuBisCO large subunit-binding protein subunit alpha, chloroplastic (546 aa).

Residues 1 to 6 constitute a chloroplast transit peptide; sequence RFSVRA. Serine 50 carries the post-translational modification Phosphoserine.

It belongs to the chaperonin (HSP60) family. Oligomer of probably six alpha and six beta subunits.

The protein localises to the plastid. Its subcellular location is the chloroplast. In terms of biological role, this protein binds RuBisCO small and large subunits and is implicated in the assembly of the enzyme oligomer. In Brassica napus (Rape), this protein is RuBisCO large subunit-binding protein subunit alpha, chloroplastic.